The primary structure comprises 1703 residues: Mediator of RNA polymerase II transcription subunit 14 (1703 aa).

Residues 755 to 766 (LSQTADLATSSA) are compositionally biased toward polar residues. Residues 755 to 781 (LSQTADLATSSAGPLLRKDQKPRKRSA) are disordered.

It belongs to the Mediator complex subunit 14 family. Component of the Mediator complex. Interacts with CDKE-1, HDA19 and LUG. Interacts with PTAC12/HMR/PAP5 and PIF4. Expressed in roots, stems, developing embryos, young leaf primordia, shoot apical meristems, inflorescence meristems, tapetum in anthers, ovules and floral organ primordia, but not in mature organs.

It is found in the nucleus. Component of the Mediator complex, a coactivator involved in the regulated transcription of nearly all RNA polymerase II-dependent genes. Mediator functions as a bridge to convey information from gene-specific regulatory proteins to the basal RNA polymerase II transcription machinery. The Mediator complex, having a compact conformation in its free form, is recruited to promoters by direct interactions with regulatory proteins and serves for the assembly of a functional pre-initiation complex with RNA polymerase II and the general transcription factors. Binds to G-box (5'-CACGTG-3')-containing regions of target genes promoters (e.g. IAA29 and IAA19). Involved in defining the duration of cell proliferation. Element of a PIF4/HMR/MED14-dependent thermoresponsive process; required for thermomorphogenetic hypocotyl growth in response to daytime warm temperature elicitation by associating to the promoters of thermoresponsive growth-relevant genes (e.g. mainly involved in biosynthesis and signaling of the phytohormone auxin); this also process implies PIF4 and its transcriptional coactivator PTAC12/HMR/PAP5 to promote the expression of target genes. The chain is Mediator of RNA polymerase II transcription subunit 14 from Arabidopsis thaliana (Mouse-ear cress).